The primary structure comprises 336 residues: Spore photoproduct lyase (336 aa).

Positions 74 to 305 constitute a Radical SAM core domain; that stretch reads CKPSANYQLP…KFGQFGYGKY (232 aa). Residues cysteine 88, cysteine 92, and cysteine 95 each coordinate [4Fe-4S] cluster. Positions 215-232 form a DNA-binding region, H-T-H motif; the sequence is ESAYNILNSGYKTGFIVG.

Belongs to the radical SAM superfamily. SPL family. As to quaternary structure, monomer or homodimer. Requires [4Fe-4S] cluster as cofactor. The cofactor is S-adenosyl-L-methionine.

The catalysed reaction is (5R)-5,6-dihydro-5-(thymidin-7-yl)thymidine in DNA = a thymidine dimer in DNA. Involved in repair of UV radiation-induced DNA damage during spore germination. Can repair thymine dimer 5-thyminyl-5,6-dihydrothymine (known as spore photoproduct (SP)) by in situ monomerization of SP to two thymines. This Clostridium acetobutylicum (strain ATCC 824 / DSM 792 / JCM 1419 / IAM 19013 / LMG 5710 / NBRC 13948 / NRRL B-527 / VKM B-1787 / 2291 / W) protein is Spore photoproduct lyase (splB).